Reading from the N-terminus, the 131-residue chain is Con-Ins Q1b (131 aa).

Residues M1–G24 form the signal peptide. Disulfide bonds link C29-C107, C41-C110, C53-C123, and C109-C114. Positions L59 to R92 are cleaved as a propeptide — c peptide. E118 is subject to 4-carboxyglutamate; partial. The residue at position 130 (S130) is a Serine amide.

It belongs to the insulin family. As to quaternary structure, heterodimer of A and B chains; disulfide-linked. Expressed by the venom gland.

The protein localises to the secreted. Functionally, this venom insulin facilitates prey capture by rapidly inducing hypoglycemic shock. Intraperitoneal injection of this peptide into zebrafish lowers blood glucose with the same potency than human insulin. In vivo, when applied to water, this peptide reduces overall locomotor activity of zebrafish larvae, observed as a significant decrease in the percentage of time spent swimming and movement frequency. The chain is Con-Ins Q1b from Conus quercinus (Oak cone).